Reading from the N-terminus, the 90-residue chain is Probable Fe(2+)-trafficking protein (90 aa).

Belongs to the Fe(2+)-trafficking protein family.

Its function is as follows. Could be a mediator in iron transactions between iron acquisition and iron-requiring processes, such as synthesis and/or repair of Fe-S clusters in biosynthetic enzymes. In Paraburkholderia xenovorans (strain LB400), this protein is Probable Fe(2+)-trafficking protein.